The primary structure comprises 512 residues: Phosphotransferase UL97 homolog (512 aa).

Aspartate 274 (proton acceptor) is an active-site residue.

This sequence belongs to the protein kinase superfamily. Tyr protein kinase family.

It catalyses the reaction L-tyrosyl-[protein] + ATP = O-phospho-L-tyrosyl-[protein] + ADP + H(+). The chain is Phosphotransferase UL97 homolog from Elephantid herpesvirus 1 (isolate Asian elephant/Berlin/Kiba/1998) (EIHV-1).